The primary structure comprises 346 residues: Putative aquaporin-7B (346 aa).

Over 1-40 the chain is Cytoplasmic; the sequence is MVQASGHRRSTRGSKMVSWSVIAKIQEIWCEEDERKMVRE. A helical transmembrane segment spans residues 41 to 58; the sequence is FLAEFMSTYVMMVFGLGS. Residues 59–71 are Extracellular-facing; the sequence is VAHMVLNKTYGSY. The chain crosses the membrane as a helical span at residues 72 to 89; the sequence is LGVNLGFGFGVTMGVHVA. Residues 90-93 are Cytoplasmic-facing; sequence GRIS. The segment at residues 94-107 is an intramembrane region (discontinuously helical); it reads GAHMNAAVTFTNCA. The NPA 1 motif lies at 98–100; it reads NAA. Residues 108 to 115 are Cytoplasmic-facing; the sequence is LGRVPWRK. A helical membrane pass occupies residues 116–136; the sequence is FPVHVLGQFLGSFLAAATIYS. Over 137-174 the chain is Extracellular; sequence LFYTAILHFSGGELMVTGPFATAGIFATYLPDHMTLWR. The helical transmembrane segment at 175 to 192 threads the bilayer; that stretch reads GFLNEEWLTRMLQLCLFT. Residues 193–204 lie on the Cytoplasmic side of the membrane; the sequence is ITDQENNPALPG. A helical membrane pass occupies residues 205–221; it reads THALVISILVVIIRVSH. The Extracellular segment spans residues 222–225; sequence GINT. The discontinuously helical intramembrane region spans 226–239; sequence GYAINPSRDPPPSI. The short motif at 230–232 is the NPA 2 element; sequence NPS. Residues 240–257 lie on the Extracellular side of the membrane; the sequence is FTFIAGWGKQVFSDGENW. Residues 258–279 traverse the membrane as a helical segment; the sequence is WWVPVVAPLLGASLGGIIYLVF. The Cytoplasmic segment spans residues 280 to 346; the sequence is IGSTIPREPL…LHESMALEHF (67 aa).

Belongs to the MIP/aquaporin (TC 1.A.8) family. In terms of assembly, homotetramer; each monomer provides an independent glycerol/water pore.

It is found in the membrane. The catalysed reaction is glycerol(in) = glycerol(out). It catalyses the reaction H2O(in) = H2O(out). In terms of biological role, aquaglyceroporins form homotetrameric transmembrane channels, with each monomer independently mediating glycerol and water transport across the plasma membrane along their osmotic gradient. This is Putative aquaporin-7B from Homo sapiens (Human).